The chain runs to 218 residues: Dehydration-responsive element-binding protein 1B (218 aa).

Positions 1–26 are disordered; sequence MEVEEAAYRTVWSEPPKRPAGRTKFR. The AP2/ERF DNA-binding region spans 32 to 95; that stretch reads VYRGVRRRGG…RGRAACLNFA (64 aa). The tract at residues 131 to 151 is disordered; sequence SAAPSSPAETFANDGDEEEDN.

This sequence belongs to the AP2/ERF transcription factor family. ERF subfamily.

The protein resides in the nucleus. Transcriptional activator that binds specifically to the DNA sequence 5'-[AG]CCGAC-3'. Binding to the C-repeat/DRE element mediates high salinity- and dehydration-inducible transcription. Confers resistance to high salt, cold and drought stress. This is Dehydration-responsive element-binding protein 1B (DREB1B) from Oryza sativa subsp. japonica (Rice).